The chain runs to 434 residues: 4-hydroxy-3-methylbut-2-en-1-yl diphosphate synthase (flavodoxin) (434 aa).

Positions 1-15 (MQSEAQSPRSSQICS) are enriched in polar residues. A disordered region spans residues 1–20 (MQSEAQSPRSSQICSTEPVF). [4Fe-4S] cluster-binding residues include cysteine 322, cysteine 325, cysteine 368, and glutamate 375.

Belongs to the IspG family. [4Fe-4S] cluster is required as a cofactor.

It carries out the reaction (2E)-4-hydroxy-3-methylbut-2-enyl diphosphate + oxidized [flavodoxin] + H2O + 2 H(+) = 2-C-methyl-D-erythritol 2,4-cyclic diphosphate + reduced [flavodoxin]. It functions in the pathway isoprenoid biosynthesis; isopentenyl diphosphate biosynthesis via DXP pathway; isopentenyl diphosphate from 1-deoxy-D-xylulose 5-phosphate: step 5/6. In terms of biological role, converts 2C-methyl-D-erythritol 2,4-cyclodiphosphate (ME-2,4cPP) into 1-hydroxy-2-methyl-2-(E)-butenyl 4-diphosphate. The polypeptide is 4-hydroxy-3-methylbut-2-en-1-yl diphosphate synthase (flavodoxin) (Burkholderia mallei (strain ATCC 23344)).